Here is a 198-residue protein sequence, read N- to C-terminus: Ribonuclease HII (198 aa).

The region spanning 9–198 is the RNase H type-2 domain; the sequence is ITVAGADEAG…LLPDQLKIDF (190 aa). A divalent metal cation is bound by residues D15, E16, and D107.

The protein belongs to the RNase HII family. It depends on Mn(2+) as a cofactor. Requires Mg(2+) as cofactor.

It is found in the cytoplasm. It carries out the reaction Endonucleolytic cleavage to 5'-phosphomonoester.. Endonuclease that specifically degrades the RNA of RNA-DNA hybrids. The sequence is that of Ribonuclease HII from Christiangramia forsetii (strain DSM 17595 / CGMCC 1.15422 / KT0803) (Gramella forsetii).